The sequence spans 206 residues: Thiamine-phosphate synthase (206 aa).

Residues 33–37 (QMRFK) and asparagine 65 contribute to the 4-amino-2-methyl-5-(diphosphooxymethyl)pyrimidine site. Mg(2+) contacts are provided by aspartate 66 and aspartate 85. Residue threonine 104 participates in 4-amino-2-methyl-5-(diphosphooxymethyl)pyrimidine binding. 130 to 132 (TAT) provides a ligand contact to 2-[(2R,5Z)-2-carboxy-4-methylthiazol-5(2H)-ylidene]ethyl phosphate. A 4-amino-2-methyl-5-(diphosphooxymethyl)pyrimidine-binding site is contributed by lysine 133. Glycine 166 is a 2-[(2R,5Z)-2-carboxy-4-methylthiazol-5(2H)-ylidene]ethyl phosphate binding site.

Belongs to the thiamine-phosphate synthase family. It depends on Mg(2+) as a cofactor.

It carries out the reaction 2-[(2R,5Z)-2-carboxy-4-methylthiazol-5(2H)-ylidene]ethyl phosphate + 4-amino-2-methyl-5-(diphosphooxymethyl)pyrimidine + 2 H(+) = thiamine phosphate + CO2 + diphosphate. The enzyme catalyses 2-(2-carboxy-4-methylthiazol-5-yl)ethyl phosphate + 4-amino-2-methyl-5-(diphosphooxymethyl)pyrimidine + 2 H(+) = thiamine phosphate + CO2 + diphosphate. The catalysed reaction is 4-methyl-5-(2-phosphooxyethyl)-thiazole + 4-amino-2-methyl-5-(diphosphooxymethyl)pyrimidine + H(+) = thiamine phosphate + diphosphate. The protein operates within cofactor biosynthesis; thiamine diphosphate biosynthesis; thiamine phosphate from 4-amino-2-methyl-5-diphosphomethylpyrimidine and 4-methyl-5-(2-phosphoethyl)-thiazole: step 1/1. Condenses 4-methyl-5-(beta-hydroxyethyl)thiazole monophosphate (THZ-P) and 2-methyl-4-amino-5-hydroxymethyl pyrimidine pyrophosphate (HMP-PP) to form thiamine monophosphate (TMP). This Flavobacterium psychrophilum (strain ATCC 49511 / DSM 21280 / CIP 103535 / JIP02/86) protein is Thiamine-phosphate synthase.